We begin with the raw amino-acid sequence, 508 residues long: UDP-N-acetylmuramoyl-L-alanyl-D-glutamate--2,6-diaminopimelate ligase (508 aa).

Ser-29 contacts UDP-N-acetyl-alpha-D-muramoyl-L-alanyl-D-glutamate. 112–118 provides a ligand contact to ATP; sequence GTNGKTS. Residues 159-160, Ser-186, Gln-192, and Arg-194 contribute to the UDP-N-acetyl-alpha-D-muramoyl-L-alanyl-D-glutamate site; that span reads TT. Lys-226 bears the N6-carboxylysine mark. Meso-2,6-diaminopimelate contacts are provided by residues Arg-398, 421–424, Gly-473, and Glu-477; that span reads DNPR. Residues 421–424 carry the Meso-diaminopimelate recognition motif motif; sequence DNPR.

This sequence belongs to the MurCDEF family. MurE subfamily. The cofactor is Mg(2+). Carboxylation is probably crucial for Mg(2+) binding and, consequently, for the gamma-phosphate positioning of ATP.

It is found in the cytoplasm. The catalysed reaction is UDP-N-acetyl-alpha-D-muramoyl-L-alanyl-D-glutamate + meso-2,6-diaminopimelate + ATP = UDP-N-acetyl-alpha-D-muramoyl-L-alanyl-gamma-D-glutamyl-meso-2,6-diaminopimelate + ADP + phosphate + H(+). It participates in cell wall biogenesis; peptidoglycan biosynthesis. Catalyzes the addition of meso-diaminopimelic acid to the nucleotide precursor UDP-N-acetylmuramoyl-L-alanyl-D-glutamate (UMAG) in the biosynthesis of bacterial cell-wall peptidoglycan. The chain is UDP-N-acetylmuramoyl-L-alanyl-D-glutamate--2,6-diaminopimelate ligase from Janthinobacterium sp. (strain Marseille) (Minibacterium massiliensis).